A 148-amino-acid chain; its full sequence is uncharacterized protein (148 aa).

One can recognise an HTH asnC-type domain in the interval Leu2 to Glu63. A DNA-binding region (H-T-H motif) is located at residues Tyr21–Lys40.

This is an uncharacterized protein from Pyrococcus furiosus (strain ATCC 43587 / DSM 3638 / JCM 8422 / Vc1).